Here is a 42-residue protein sequence, read N- to C-terminus: DRDSCVDKSRCAKYGYYQECTDCCKKYGHNGGTCMFFKCKCA.

Intrachain disulfides connect Cys-5-Cys-23, Cys-11-Cys-34, Cys-20-Cys-39, and Cys-24-Cys-41.

Belongs to the ergtoxin family. Gamma-KTx 1 subfamily. As to expression, expressed by the venom gland.

The protein resides in the secreted. Functionally, blocks Kv11/ERG potassium channels. This Centruroides elegans (Bark scorpion) protein is Potassium channel toxin gamma-KTx 1.2.